The chain runs to 353 residues: Guanine nucleotide-binding protein subunit alpha (353 aa).

A disordered region spans residues 1 to 25 (MGCGMSTEDKEGKARNEEIENQLKR). A lipid anchor (N-myristoyl glycine) is attached at G2. C3 carries the S-palmitoyl cysteine lipid modification. Residues 7–25 (TEDKEGKARNEEIENQLKR) show a composition bias toward basic and acidic residues. A G-alpha domain is found at 32-353 (NEIKMLLLGA…QENLRLCGLI (322 aa)). The G1 motif stretch occupies residues 35-48 (KMLLLGAGESGKST). GTP-binding residues include E43, S44, G45, K46, S47, T48, D150, L175, T181, G203, N269, K270, D272, and A325. A Mg(2+)-binding site is contributed by S47. The interval 173-181 (DVLRSRVKT) is G2 motif. Residue T181 participates in Mg(2+) binding. The G3 motif stretch occupies residues 196–205 (YRMFDVGGQR). Residues 265-272 (ILFLNKID) are G4 motif. A G5 motif region spans residues 323–328 (TCATDT).

Belongs to the G-alpha family. G(q) subfamily. As to quaternary structure, g proteins are composed of 3 units; alpha, beta and gamma. The alpha chain contains the guanine nucleotide binding site. Requires Mg(2+) as cofactor.

Functionally, guanine nucleotide-binding proteins (G proteins) are involved as modulators or transducers in various transmembrane signaling systems. The chain is Guanine nucleotide-binding protein subunit alpha (fadA) from Emericella nidulans (strain FGSC A4 / ATCC 38163 / CBS 112.46 / NRRL 194 / M139) (Aspergillus nidulans).